The following is a 116-amino-acid chain: Ig heavy chain V-A1 region BS-5 (116 aa).

Glutamine 1 carries the pyrrolidone carboxylic acid modification. One can recognise an Ig-like domain in the interval 1–107 (QSVEESGGRL…LVHLAFVDVW (107 aa)).

The chain is Ig heavy chain V-A1 region BS-5 from Oryctolagus cuniculus (Rabbit).